Here is a 945-residue protein sequence, read N- to C-terminus: Leucine--tRNA ligase (945 aa).

The short motif at 43–53 (PYPNGAVHIGH) is the 'HIGH' region element. Residues 638–642 (KMSKS) carry the 'KMSKS' region motif. Lys-641 provides a ligand contact to ATP.

It belongs to the class-I aminoacyl-tRNA synthetase family.

Its subcellular location is the cytoplasm. The enzyme catalyses tRNA(Leu) + L-leucine + ATP = L-leucyl-tRNA(Leu) + AMP + diphosphate. This Pyrobaculum islandicum (strain DSM 4184 / JCM 9189 / GEO3) protein is Leucine--tRNA ligase.